A 424-amino-acid polypeptide reads, in one-letter code: Dual-specificity RNA methyltransferase RlmN (424 aa).

Glutamate 132 functions as the Proton acceptor in the catalytic mechanism. Positions 138–388 (GPDRGTLCVS…VRTPRGRDIL (251 aa)) constitute a Radical SAM core domain. A disulfide bond links cysteine 145 and cysteine 391. [4Fe-4S] cluster contacts are provided by cysteine 152, cysteine 156, and cysteine 159. S-adenosyl-L-methionine-binding positions include 217–218 (GE), serine 249, 271–273 (SLH), and asparagine 348. The active-site S-methylcysteine intermediate is cysteine 391.

This sequence belongs to the radical SAM superfamily. RlmN family. [4Fe-4S] cluster serves as cofactor.

The protein localises to the cytoplasm. The enzyme catalyses adenosine(2503) in 23S rRNA + 2 reduced [2Fe-2S]-[ferredoxin] + 2 S-adenosyl-L-methionine = 2-methyladenosine(2503) in 23S rRNA + 5'-deoxyadenosine + L-methionine + 2 oxidized [2Fe-2S]-[ferredoxin] + S-adenosyl-L-homocysteine. The catalysed reaction is adenosine(37) in tRNA + 2 reduced [2Fe-2S]-[ferredoxin] + 2 S-adenosyl-L-methionine = 2-methyladenosine(37) in tRNA + 5'-deoxyadenosine + L-methionine + 2 oxidized [2Fe-2S]-[ferredoxin] + S-adenosyl-L-homocysteine. In terms of biological role, specifically methylates position 2 of adenine 2503 in 23S rRNA and position 2 of adenine 37 in tRNAs. m2A2503 modification seems to play a crucial role in the proofreading step occurring at the peptidyl transferase center and thus would serve to optimize ribosomal fidelity. In Methylobacterium radiotolerans (strain ATCC 27329 / DSM 1819 / JCM 2831 / NBRC 15690 / NCIMB 10815 / 0-1), this protein is Dual-specificity RNA methyltransferase RlmN.